Here is a 157-residue protein sequence, read N- to C-terminus: MERIPMTAEGHAALQAELKVLKSVERPSIIAAISEARSHGDLSENAEYHAAKEKQSFIEGRISELDDKLARADVIDVSKLGGSKVRFGATVTIADVDTEDEQTYKIVGEDEADVKQGKISVTSPIARALIGKEEGDEAEVAAPAGARAYEVIKVVYK.

Belongs to the GreA/GreB family.

Functionally, necessary for efficient RNA polymerase transcription elongation past template-encoded arresting sites. The arresting sites in DNA have the property of trapping a certain fraction of elongating RNA polymerases that pass through, resulting in locked ternary complexes. Cleavage of the nascent transcript by cleavage factors such as GreA or GreB allows the resumption of elongation from the new 3'terminus. GreA releases sequences of 2 to 3 nucleotides. This chain is Transcription elongation factor GreA, found in Hyphomonas neptunium (strain ATCC 15444).